Consider the following 945-residue polypeptide: Oxysterol-binding protein homolog C23H4.01c (945 aa).

A GOLD domain is found at 1–131 (METVEIRSKS…PKTVTFLLTA (131 aa)). A PH domain is found at 149–243 (KQIISGTLLK…WCNALEKAKN (95 aa)). S288, S419, and S421 each carry phosphoserine. Disordered stretches follow at residues 396–555 (ESGA…LPHS) and 846–894 (LEKD…MEEK). A compositionally biased stretch (low complexity) spans 443-454 (TSSISDTSSNSS). The span at 460-470 (LNATSLASTVD) shows a compositional bias: polar residues. A compositionally biased stretch (basic and acidic residues) spans 482–499 (ESNKENDIKRKQPFHDLM). S503 carries the phosphoserine modification.

It belongs to the OSBP family.

It is found in the cytoplasm. This Schizosaccharomyces pombe (strain 972 / ATCC 24843) (Fission yeast) protein is Oxysterol-binding protein homolog C23H4.01c.